The primary structure comprises 428 residues: Putative POM121-like protein 1 (428 aa).

Disordered regions lie at residues 1 to 23, 36 to 204, 254 to 293, 306 to 384, and 402 to 428; these read MDSLWGPGAGSHPFGVHNSRLSP, KESG…KFPL, DCRPSRPSHTLSSLATGASGLPAVSKAPSMDAQQERHKSQ, TEVP…PSTL, and GPQPQLQQVPRGQNQRSQTSRTSSCPK. Residues 44–62 are compositionally biased toward basic and acidic residues; it reads EQDKDPRVQENPGDQRRVP. The span at 106–117 shows a compositional bias: low complexity; the sequence is QTSQTSWTSSCT. Polar residues-rich tracts occupy residues 118 to 129, 144 to 155, 260 to 269, 326 to 347, and 403 to 415; these read NRNAISSSYSST, SHCQLTLSSSKT, PSHTLSSLAT, FSSSDPLPATSSHSQDSAQVTS, and PQPQLQQVPRGQN. Residues 416–428 are compositionally biased toward low complexity; that stretch reads QRSQTSRTSSCPK.

The protein belongs to the POM121 family.

The polypeptide is Putative POM121-like protein 1 (POM121L1P) (Homo sapiens (Human)).